The primary structure comprises 405 residues: uncharacterized protein (405 aa).

13 helical membrane-spanning segments follow: residues 19-39, 48-68, 85-105, 106-126, 129-149, 156-176, 178-198, 224-244, 252-272, 283-303, 309-329, 344-364, and 366-386; these read IVSI…PLAV, MGFS…ATLL, IVVF…LADI, ASAW…ILGI, SFAG…LHIG, GIVT…CYAW, GLQG…LLAL, GMAL…ITLF, GAAF…LLFP, VAMI…TAAM, IGVL…GVVA, TYTV…GLVM, and WAGV…ALLL.

It belongs to the major facilitator superfamily. YhhS family.

It is found in the cell inner membrane. This is an uncharacterized protein from Salmonella paratyphi C (strain RKS4594).